We begin with the raw amino-acid sequence, 566 residues long: Myo-inositol transporter 1A (566 aa).

Over 1–64 (MSDEKNYGIS…ERTEKLTKFV (64 aa)) the chain is Cytoplasmic. A helical transmembrane segment spans residues 65–85 (VGLALFASVSGFCFGFDTGVI). Residues 86-106 (SAALVSIKDDFGHILDDTEKE) are Extracellular-facing. Residues 107–127 (WISAATSCGALVGALSSGALA) form a helical membrane-spanning segment. The Cytoplasmic portion of the chain corresponds to 128 to 140 (DRVGRKWTLAVGD). The helical transmembrane segment at 141-161 (VWFTLGAIIICSSFSVVQMIV) threads the bilayer. Residues 162 to 163 (GR) lie on the Extracellular side of the membrane. Residues 164 to 184 (AVLGLGVGTAAAIAPLYIAEV) traverse the membrane as a helical segment. Topologically, residues 185–192 (APTRFRGA) are cytoplasmic. A helical transmembrane segment spans residues 193–213 (LVTVQSIAITGGQFFSYCIGI). Over 214–222 (PLTGHNGWR) the chain is Extracellular. A helical membrane pass occupies residues 223–243 (IQFAIGIVPAVVQAAVVHFLP). Over 244-313 (ESPRYDLLRG…VLTEGKYRKP (70 aa)) the chain is Cytoplasmic. A helical transmembrane segment spans residues 314–334 (AITALGIGIFQQLCGFNSLMY). At 335–349 (YAATIFSYAGFDNPT) the chain is on the extracellular side. Residues 350–370 (SVGLIVSGTNWFFTFVAMMIL) form a helical membrane-spanning segment. Residues 371–377 (DRVGKRR) are Cytoplasmic-facing. The chain crosses the membrane as a helical span at residues 378-398 (ILLSTYPGMIAGLALASVAFW). Over 399–421 (KMTGSTGHRLVEGTEYPQQWSNM) the chain is Extracellular. A helical membrane pass occupies residues 422-442 (MLGMMVVFIAFYATGSGNITW). The Cytoplasmic portion of the chain corresponds to 443 to 458 (TVGEMFPLEMRGIGAS). The helical transmembrane segment at 459 to 479 (ILAGGVWAANIVISATFLTLM) threads the bilayer. Over 480–485 (NAIGPT) the chain is Extracellular. Residues 486–506 (PTFALYAGICLAGLIFIYFCY) traverse the membrane as a helical segment. Residues 507–566 (PEPSGLSLEEIQIIYNYGFGVQKSREIRAEHKLKAQEMRDRANSHIGGSATASDDQLNKV) are Cytoplasmic-facing. Positions 546–566 (DRANSHIGGSATASDDQLNKV) are disordered. Polar residues predominate over residues 556–566 (ATASDDQLNKV).

It belongs to the major facilitator superfamily. Sugar transporter (TC 2.A.1.1) family.

The protein localises to the cell membrane. The catalysed reaction is myo-inositol(out) + H(+)(out) = myo-inositol(in) + H(+)(in). Major transporter for myo-inositol. Plays a role in the traversal of the host blood-brain barrier. This is Myo-inositol transporter 1A from Cryptococcus neoformans var. grubii serotype A (strain H99 / ATCC 208821 / CBS 10515 / FGSC 9487) (Filobasidiella neoformans var. grubii).